A 179-amino-acid chain; its full sequence is MARLAELYNKEMVPALMKDQNYKNIMEVPKLVKIVVNMGLGEAIQNVKILDSAAEELAAITGQRPVITKAKKSIAGFKLRQGMPIGCAVTLRRDKMYEFLDRLVSVSLPRVRDFKGISGKAFDGKGNYSLGVKEQLIFPEIDYDKVDKIKGLNITIVTTAKTDAEGKALLKLMGLPFRN.

This sequence belongs to the universal ribosomal protein uL5 family. In terms of assembly, part of the 50S ribosomal subunit; part of the 5S rRNA/L5/L18/L25 subcomplex. Contacts the 5S rRNA and the P site tRNA. Forms a bridge to the 30S subunit in the 70S ribosome.

Functionally, this is one of the proteins that bind and probably mediate the attachment of the 5S RNA into the large ribosomal subunit, where it forms part of the central protuberance. In the 70S ribosome it contacts protein S13 of the 30S subunit (bridge B1b), connecting the 2 subunits; this bridge is implicated in subunit movement. Contacts the P site tRNA; the 5S rRNA and some of its associated proteins might help stabilize positioning of ribosome-bound tRNAs. This Geobacter sp. (strain M21) protein is Large ribosomal subunit protein uL5.